Reading from the N-terminus, the 349-residue chain is D-alanine--D-alanine ligase (349 aa).

Residues 132–335 form the ATP-grasp domain; it reads KHVFEAVGVP…YSDLIEKLVD (204 aa). 162–217 is an ATP binding site; that stretch reads VEKLEFPVFVKPANMGSSVGISKVDDLADLQPALSEAYKYDNRVVIEQGVDAREIE. Residues aspartate 289, glutamate 302, and asparagine 304 each contribute to the Mg(2+) site.

The protein belongs to the D-alanine--D-alanine ligase family. It depends on Mg(2+) as a cofactor. Mn(2+) is required as a cofactor.

The protein resides in the cytoplasm. It catalyses the reaction 2 D-alanine + ATP = D-alanyl-D-alanine + ADP + phosphate + H(+). The protein operates within cell wall biogenesis; peptidoglycan biosynthesis. Cell wall formation. This Lactococcus lactis subsp. cremoris (strain SK11) protein is D-alanine--D-alanine ligase.